We begin with the raw amino-acid sequence, 229 residues long: Large ribosomal subunit protein uL1 (229 aa).

The protein belongs to the universal ribosomal protein uL1 family. As to quaternary structure, part of the 50S ribosomal subunit.

In terms of biological role, binds directly to 23S rRNA. The L1 stalk is quite mobile in the ribosome, and is involved in E site tRNA release. Functionally, protein L1 is also a translational repressor protein, it controls the translation of the L11 operon by binding to its mRNA. This Streptococcus sanguinis (strain SK36) protein is Large ribosomal subunit protein uL1.